Consider the following 206-residue polypeptide: Urease accessory protein UreG (206 aa).

13 to 20 serves as a coordination point for GTP; that stretch reads GPVGSGKT.

It belongs to the SIMIBI class G3E GTPase family. UreG subfamily. As to quaternary structure, homodimer. UreD, UreF and UreG form a complex that acts as a GTP-hydrolysis-dependent molecular chaperone, activating the urease apoprotein by helping to assemble the nickel containing metallocenter of UreC. The UreE protein probably delivers the nickel.

Its subcellular location is the cytoplasm. Its function is as follows. Facilitates the functional incorporation of the urease nickel metallocenter. This process requires GTP hydrolysis, probably effectuated by UreG. The sequence is that of Urease accessory protein UreG from Haloquadratum walsbyi (strain DSM 16790 / HBSQ001).